The following is a 632-amino-acid chain: Nucleoside triphosphatase I (632 aa).

A Helicase ATP-binding domain is found at 42–204 (FLGLDKMHSL…IMLVNLLRPK (163 aa)). Residue 55–62 (HETGVGKT) participates in ATP binding. A DEXH box motif is present at residues 141-144 (DECH). Residues 367 to 532 (KFTDVCLRIL…EFTQLFKVFK (166 aa)) form the Helicase C-terminal domain. Positions 457–524 (DIFILDMTWN…DIIRNKSKEF (68 aa)) are binding to the cap-specific mRNA (nucleoside-2'-O-)-methyltransferase.

Belongs to the helicase family. NPH I subfamily. Monomer. Interacts (via C-terminus) with RAP94 (via N-terminus). Interacts with the cap-specific mRNA (nucleoside-2'-O-)-methyltransferase.

The protein localises to the virion. The enzyme catalyses a ribonucleoside 5'-triphosphate + H2O = a ribonucleoside 5'-diphosphate + phosphate + H(+). DNA-dependent ATPase required for providing the needed energy to achieve the termination of early transcripts. Acts in concert with the RAP94 subunit of the virion RNA polymerase and the capping enzyme/VTF to catalyze release of UUUUUNU-containing nascent RNA from the elongation complex. NPH-I must bind ssDNA in order to exhibit ATPase activity. The sequence is that of Nucleoside triphosphatase I (NPH1) from Rabbit fibroma virus (strain Kasza) (RFV).